Here is a 156-residue protein sequence, read N- to C-terminus: Small ribosomal subunit protein uS7 (156 aa).

This sequence belongs to the universal ribosomal protein uS7 family. As to quaternary structure, part of the 30S ribosomal subunit. Contacts proteins S9 and S11.

One of the primary rRNA binding proteins, it binds directly to 16S rRNA where it nucleates assembly of the head domain of the 30S subunit. Is located at the subunit interface close to the decoding center, probably blocks exit of the E-site tRNA. This chain is Small ribosomal subunit protein uS7, found in Desulfitobacterium hafniense (strain Y51).